Reading from the N-terminus, the 449-residue chain is Asparagine--tRNA ligase (449 aa).

It belongs to the class-II aminoacyl-tRNA synthetase family. Homodimer.

It localises to the cytoplasm. It catalyses the reaction tRNA(Asn) + L-asparagine + ATP = L-asparaginyl-tRNA(Asn) + AMP + diphosphate + H(+). This Deinococcus geothermalis (strain DSM 11300 / CIP 105573 / AG-3a) protein is Asparagine--tRNA ligase.